The following is a 77-amino-acid chain: Translation initiation factor IF-1, chloroplastic (77 aa).

Residues 1 to 71 (MKEQKWIHEG…TRGRIIYRLR (71 aa)) form the S1-like domain.

It belongs to the IF-1 family. In terms of assembly, component of the 30S ribosomal translation pre-initiation complex which assembles on the 30S ribosome in the order IF-2 and IF-3, IF-1 and N-formylmethionyl-tRNA(fMet); mRNA recruitment can occur at any time during PIC assembly.

Its subcellular location is the plastid. The protein resides in the chloroplast. One of the essential components for the initiation of protein synthesis. Stabilizes the binding of IF-2 and IF-3 on the 30S subunit to which N-formylmethionyl-tRNA(fMet) subsequently binds. Helps modulate mRNA selection, yielding the 30S pre-initiation complex (PIC). Upon addition of the 50S ribosomal subunit IF-1, IF-2 and IF-3 are released leaving the mature 70S translation initiation complex. The polypeptide is Translation initiation factor IF-1, chloroplastic (Garrya elliptica (Wavyleaf silktassel)).